Consider the following 130-residue polypeptide: Small ribosomal subunit protein uS9 (130 aa).

This sequence belongs to the universal ribosomal protein uS9 family.

This chain is Small ribosomal subunit protein uS9, found in Geobacillus sp. (strain WCH70).